The following is a 150-amino-acid chain: Macrodomain Ter protein (150 aa).

The protein belongs to the MatP family. Homodimer.

The protein resides in the cytoplasm. Functionally, required for spatial organization of the terminus region of the chromosome (Ter macrodomain) during the cell cycle. Prevents early segregation of duplicated Ter macrodomains during cell division. Binds specifically to matS, which is a 13 bp signature motif repeated within the Ter macrodomain. The sequence is that of Macrodomain Ter protein from Shigella boydii serotype 18 (strain CDC 3083-94 / BS512).